The primary structure comprises 205 residues: ATP-dependent Clp protease proteolytic subunit 2 (205 aa).

S100 functions as the Nucleophile in the catalytic mechanism. H125 is an active-site residue.

It belongs to the peptidase S14 family. As to quaternary structure, fourteen ClpP subunits assemble into 2 heptameric rings which stack back to back to give a disk-like structure with a central cavity, resembling the structure of eukaryotic proteasomes.

The protein resides in the cytoplasm. It carries out the reaction Hydrolysis of proteins to small peptides in the presence of ATP and magnesium. alpha-casein is the usual test substrate. In the absence of ATP, only oligopeptides shorter than five residues are hydrolyzed (such as succinyl-Leu-Tyr-|-NHMec, and Leu-Tyr-Leu-|-Tyr-Trp, in which cleavage of the -Tyr-|-Leu- and -Tyr-|-Trp bonds also occurs).. Functionally, cleaves peptides in various proteins in a process that requires ATP hydrolysis. Has a chymotrypsin-like activity. Plays a major role in the degradation of misfolded proteins. The polypeptide is ATP-dependent Clp protease proteolytic subunit 2 (Chlamydia abortus (strain DSM 27085 / S26/3) (Chlamydophila abortus)).